The sequence spans 198 residues: Thymidine kinase (198 aa).

Residues 9–16 and 87–90 each bind ATP; these read STMNAGKS and DEAQ. Residue Glu88 is the Proton acceptor of the active site. Cys145, Cys147, Cys182, and His185 together coordinate Zn(2+).

It belongs to the thymidine kinase family. Homotetramer.

It is found in the cytoplasm. It catalyses the reaction thymidine + ATP = dTMP + ADP + H(+). The chain is Thymidine kinase from Ruegeria pomeroyi (strain ATCC 700808 / DSM 15171 / DSS-3) (Silicibacter pomeroyi).